A 152-amino-acid polypeptide reads, in one-letter code: Calmodulin (152 aa).

Ala-2 carries the post-translational modification N-acetylalanine. EF-hand domains follow at residues 10–45 (EQIA…LGQN), 46–81 (PTEA…KMQD), 83–118 (DTEE…LGEK), and 119–152 (LTNE…IVRN). Residues Asp-23, Asp-25, Asp-27, Ser-29, Glu-34, Asp-59, Asp-61, Asn-63, Asn-65, Glu-70, Asp-96, Asp-98, Asn-100, Tyr-102, Glu-107, Asp-132, Asp-134, Asp-136, Gln-138, and Glu-143 each coordinate Ca(2+).

It belongs to the calmodulin family. As to quaternary structure, interacts with cmbB, numA/nucleomorphin, pgkA/phosphoglycerate kinase, and thyB/thymidine kinase in the presence of Ca(2+). Interacts with dwwA in the absence of Ca(2+). Post-translationally, the N-terminus is blocked. Trimethylation of Lys-118 observed in other calmodulins is absent here.

The protein resides in the contractile vacuole. Its function is as follows. Calmodulin mediates the control of a large number of enzymes, ion channels and other proteins by Ca(2+). Among the enzymes to be stimulated by the calmodulin-Ca(2+) complex are a number of protein kinases and phosphatases. The polypeptide is Calmodulin (calA) (Dictyostelium discoideum (Social amoeba)).